Reading from the N-terminus, the 604-residue chain is UvrABC system protein C (604 aa).

In terms of domain architecture, GIY-YIG spans 10-89 (ELPGVYLMKD…VKKNRPHYNI (80 aa)). Residues 199-234 (SGTIKELQEKMNIHAIAQEYESAAVIRDQIDALKSL) enclose the UVR domain.

It belongs to the UvrC family. Interacts with UvrB in an incision complex.

Its subcellular location is the cytoplasm. Functionally, the UvrABC repair system catalyzes the recognition and processing of DNA lesions. UvrC both incises the 5' and 3' sides of the lesion. The N-terminal half is responsible for the 3' incision and the C-terminal half is responsible for the 5' incision. The sequence is that of UvrABC system protein C from Methanococcoides burtonii (strain DSM 6242 / NBRC 107633 / OCM 468 / ACE-M).